Reading from the N-terminus, the 28-residue chain is Taicatoxin, alpha-neurotoxin-like component (28 aa).

Cysteine 3 and cysteine 21 are joined by a disulfide.

The protein belongs to the three-finger toxin family. Long-chain subfamily. Type II alpha-neurotoxin sub-subfamily. As to quaternary structure, heterotrimer composed of this alpha-neurotoxin-like peptide of 8 kDa, a neurotoxic phospholipase of 16 kDa (AC Q7LZG2) and a serine protease inhibitor of 7 kDa (AC B7S4N9) at an approximate stoichiometry of 1:1:4; non-covalently linked. As to expression, expressed by the venom gland.

The protein resides in the secreted. In terms of biological role, the heterotrimer blocks the voltage-dependent L-type calcium channels (Cav1/CACNA1) from the heart, and the small conductance calcium-activated potassium channels (KCa2/KCNN) in the chromaffin cells and in the brain. Is very toxic to mice. The protein is Taicatoxin, alpha-neurotoxin-like component of Oxyuranus scutellatus scutellatus (Australian taipan).